Here is a 247-residue protein sequence, read N- to C-terminus: DNA polymerase sliding clamp (247 aa).

The protein belongs to the PCNA family. As to quaternary structure, homotrimer. The subunits circularize to form a toroid; DNA passes through its center. Replication factor C (RFC) is required to load the toroid on the DNA.

Functionally, sliding clamp subunit that acts as a moving platform for DNA processing. Responsible for tethering the catalytic subunit of DNA polymerase and other proteins to DNA during high-speed replication. This Halobacterium salinarum (strain ATCC 29341 / DSM 671 / R1) protein is DNA polymerase sliding clamp.